The sequence spans 101 residues: Putative antitoxin HigA2 (101 aa).

One can recognise an HTH cro/C1-type domain in the interval 35-90 (LRELRAAQSLTQVQVAALAHIRQSRVSSIENGDIGSAQVNTLRKYVSALGGELDIT). A DNA-binding region (H-T-H motif) is located at residues 46-65 (QVQVAALAHIRQSRVSSIEN).

In terms of biological role, putative antitoxin component of a type II toxin-antitoxin (TA) system. Its cognate toxin would be HigB2. This is Putative antitoxin HigA2 from Mycobacterium tuberculosis (strain ATCC 25618 / H37Rv).